The sequence spans 266 residues: Beta-lactamase OXA-20 (266 aa).

Residues 1–21 (MIIRFLALLFSAVVLVSLGHA) form the signal peptide. Serine 72 acts as the Acyl-ester intermediate in catalysis. Lysine 75 carries the N6-carboxylysine modification. 210-212 (KTG) lines the substrate pocket.

The protein belongs to the class-D beta-lactamase family.

The catalysed reaction is a beta-lactam + H2O = a substituted beta-amino acid. Its activity is regulated as follows. Inhibited by clavulanic acid. In terms of biological role, this is an oxacillin-hydrolyzing beta-lactamase. The polypeptide is Beta-lactamase OXA-20 (bla) (Pseudomonas aeruginosa).